We begin with the raw amino-acid sequence, 461 residues long: Probable ornithine decarboxylase (461 aa).

Residues 1 to 35 (MTGTKRNGEEVVNENNNNNVAEETNKKAKVDESST) are disordered. Residues 13-22 (NENNNNNVAE) show a composition bias toward low complexity. Basic and acidic residues predominate over residues 23 to 32 (ETNKKAKVDE). K116 carries the post-translational modification N6-(pyridoxal phosphate)lysine. Residues S247, G284, and 317-320 (EPGR) each bind pyridoxal 5'-phosphate. 375–376 (FD) contributes to the substrate binding site. The active-site Proton donor; shared with dimeric partner is the C402. A substrate-binding site is contributed by D403. Y431 serves as a coordination point for pyridoxal 5'-phosphate.

The protein belongs to the Orn/Lys/Arg decarboxylase class-II family. Homodimer. Only the dimer is catalytically active, as the active sites are constructed of residues from both monomers. Requires pyridoxal 5'-phosphate as cofactor.

It carries out the reaction L-ornithine + H(+) = putrescine + CO2. Its pathway is amine and polyamine biosynthesis; putrescine biosynthesis via L-ornithine pathway; putrescine from L-ornithine: step 1/1. Its activity is regulated as follows. Inhibited by antizyme (AZ) in response to polyamine levels. AZ inhibits the assembly of the functional homodimer by binding to ODC monomers and targeting them for ubiquitin-independent proteolytic destruction by the 26S proteasome. Its function is as follows. Catalyzes the first and rate-limiting step of polyamine biosynthesis that converts ornithine into putrescine, which is the precursor for the polyamines, spermidine and spermine. Polyamines are essential for cell proliferation and are implicated in cellular processes, ranging from DNA replication to apoptosis. The chain is Probable ornithine decarboxylase (odc) from Dictyostelium discoideum (Social amoeba).